The chain runs to 1103 residues: Ubiquitin carboxyl-terminal hydrolase 7 (1103 aa).

Residues 1 to 11 (MNHQQQQQQQQ) show a composition bias toward low complexity. Residues 1–40 (MNHQQQQQQQQKAGEQQLSEPEDMEMEAGDTDDPPRITQN) are disordered. The interaction with TSPYL5 stretch occupies residues 1-209 (MNHQQQQQQQ…APHGVAWDSK (209 aa)). Ser-19 carries the phosphoserine modification. Residues 20–32 (EPEDMEMEAGDTD) are compositionally biased toward acidic residues. A phosphoserine mark is found at Ser-50 and Ser-54. Residues 54–209 (SNAEEDMEDD…APHGVAWDSK (156 aa)) form an interaction with p53/TP53 and MDM2 region. The MATH domain occupies 69–196 (EATFQFTVER…DDKVTFEVFV (128 aa)). Residues 71–206 (TFQFTVERFS…QADAPHGVAW (136 aa)) are necessary for nuclear localization. One can recognise a USP domain in the interval 215–522 (VGLKNQGATC…NAYMLVYIRE (308 aa)). Catalysis depends on Cys-224, which acts as the Nucleophile. His-465 serves as the catalytic Proton acceptor. At Lys-870 the chain carries N6-acetyllysine; alternate. Residue Lys-870 forms a Glycyl lysine isopeptide (Lys-Gly) (interchain with G-Cter in SUMO2); alternate linkage. A Glycyl lysine isopeptide (Lys-Gly) (interchain with G-Cter in ubiquitin); alternate cross-link involves residue Lys-870. A Glycyl lysine isopeptide (Lys-Gly) (interchain with G-Cter in SUMO2) cross-link involves residue Lys-883. Position 964 is a phosphoserine (Ser-964). Lys-1085 and Lys-1097 each carry N6-acetyllysine.

This sequence belongs to the peptidase C19 family. As to quaternary structure, monomer. Homodimer. Part of a complex with DAXX, MDM2, RASSF1 and USP7. Part of a complex with DAXX, MDM2 and USP7. Interacts with MDM2; the interaction is independent of p53/TP53. Interacts with DAXX; the interaction is direct and independent of MDM2 and p53/TP53. Component of a complex composed of KMT2E, OGT and USP7; the complex stabilizes KMT2E, preventing KMT2E ubiquitination and proteasomal-mediated degradation. Interacts (via MATH domain) with KMT2E. Interacts with OGT. Interacts with FOXO4; the interaction is enhanced in presence of hydrogen peroxide and occurs independently of p53/TP53. Interacts with p53/TP53; the interaction is enhanced in response to DNA damage; the interaction is impaired by TSPYL5. Interacts with PTEN; the interaction is direct. Interacts with ATXN1 and the strength of interaction is influenced by the length of the poly-Gln region in ATXN1. A weaker interaction seen with mutants having longer poly-Gln regions. Interacts with KIAA1530/UVSSA. Interacts with MEX3C and antagonizes its ability to degrade mRNA. Interacts with DNMT1 and UHRF1. Interacts with FOXP3. Interacts (via MATH domain) with RNF220. Associated component of the Polycomb group (PcG) multiprotein PRC1-like complex. Interacts with EPOP. Interacts with OTUD4 and USP9X; the interaction is direct. Interacts with CRY2. Interacts with REST. Interacts with ERCC6. Part of a complex consisting of USP7, MAGEL2 and TRIM27; directly interacts with MAGEL2; directly interacts with TRIM27. Post-translationally, polyneddylated. In terms of processing, not sumoylated. Ubiquitinated at Lys-870. Polyubiquitinated. As to expression, strongly expressed in the testis, spleen and brain. Weakly expressed in the stomach, small intestine, skeletal muscle and uterus.

It is found in the nucleus. Its subcellular location is the cytoplasm. It localises to the PML body. The protein resides in the chromosome. It catalyses the reaction Thiol-dependent hydrolysis of ester, thioester, amide, peptide and isopeptide bonds formed by the C-terminal Gly of ubiquitin (a 76-residue protein attached to proteins as an intracellular targeting signal).. In terms of biological role, hydrolase that deubiquitinates target proteins such as ARMC5, FOXO4, DEPTOR, KAT5, p53/TP53, MDM2, ERCC6, DNMT1, UHRF1, PTEN, KMT2E/MLL5 and DAXX. Together with DAXX, prevents MDM2 self-ubiquitination and enhances the E3 ligase activity of MDM2 towards p53/TP53, thereby promoting p53/TP53 ubiquitination and proteasomal degradation. Deubiquitinates p53/TP53, preventing degradation of p53/TP53, and enhances p53/TP53-dependent transcription regulation, cell growth repression and apoptosis. Deubiquitinates p53/TP53 and MDM2 and strongly stabilizes p53/TP53 even in the presence of excess MDM2, and also induces p53/TP53-dependent cell growth repression and apoptosis. Deubiquitination of FOXO4 in presence of hydrogen peroxide is not dependent on p53/TP53 and inhibits FOXO4-induced transcriptional activity. In association with DAXX, is involved in the deubiquitination and translocation of PTEN from the nucleus to the cytoplasm, both processes that are counteracted by PML. Deubiquitinates KMT2E preventing KMT2E proteasomal-mediated degradation. Involved in cell proliferation during early embryonic development. Involved in transcription-coupled nucleotide excision repair (TC-NER) in response to UV damage: recruited to DNA damage sites following interaction with KIAA1530/UVSSA and promotes deubiquitination of ERCC6, preventing UV-induced degradation of ERCC6. Involved in maintenance of DNA methylation via its interaction with UHRF1 and DNMT1: acts by mediating deubiquitination of UHRF1 and DNMT1, preventing their degradation and promoting DNA methylation by DNMT1. Deubiquitinates alkylation repair enzyme ALKBH3. OTUD4 recruits USP7 and USP9X to stabilize ALKBH3, thereby promoting the repair of alkylated DNA lesions. Acts as a chromatin regulator via its association with the Polycomb group (PcG) multiprotein PRC1-like complex; may act by deubiquitinating components of the PRC1-like complex. Able to mediate deubiquitination of histone H2B; it is however unsure whether this activity takes place in vivo. Exhibits a preference towards 'Lys-48'-linked ubiquitin chains. Increases regulatory T-cells (Treg) suppressive capacity by deubiquitinating and stabilizing transcription factor FOXP3 which is crucial for Treg cell function. Plays a role in the maintenance of the circadian clock periodicity via deubiquitination and stabilization of the CRY1 and CRY2 proteins. Deubiquitinates REST, thereby stabilizing REST and promoting the maintenance of neural progenitor cells. Deubiquitinates SIRT7, inhibiting SIRT7 histone deacetylase activity and regulating gluconeogenesis. Involved in the regulation of WASH-dependent actin polymerization at the surface of endosomes and the regulation of endosomal protein recycling. It maintains optimal WASH complex activity and precise F-actin levels via deubiquitination of TRIM27 and WASHC1. Mediates the deubiquitination of phosphorylated DEPTOR, promoting its stability and leading to decreased mTORC1 signaling. This Rattus norvegicus (Rat) protein is Ubiquitin carboxyl-terminal hydrolase 7 (Usp7).